Consider the following 491-residue polypeptide: 3-octaprenyl-4-hydroxybenzoate carboxy-lyase (491 aa).

Position 172 (Asn172) interacts with Mn(2+). Prenylated FMN contacts are provided by residues 175 to 177, 189 to 191, and 194 to 195; these read IYR, RWL, and RG. A Mn(2+)-binding site is contributed by Glu238. Residue Asp287 is the Proton donor of the active site.

It belongs to the UbiD family. Homohexamer. Prenylated FMN is required as a cofactor. The cofactor is Mn(2+).

Its subcellular location is the cell membrane. It catalyses the reaction a 4-hydroxy-3-(all-trans-polyprenyl)benzoate + H(+) = a 2-(all-trans-polyprenyl)phenol + CO2. The protein operates within cofactor biosynthesis; ubiquinone biosynthesis. Catalyzes the decarboxylation of 3-octaprenyl-4-hydroxy benzoate to 2-octaprenylphenol, an intermediate step in ubiquinone biosynthesis. The sequence is that of 3-octaprenyl-4-hydroxybenzoate carboxy-lyase from Alcanivorax borkumensis (strain ATCC 700651 / DSM 11573 / NCIMB 13689 / SK2).